Consider the following 572-residue polypeptide: Hsp70-Hsp90 organizing protein 1 (572 aa).

TPR repeat units follow at residues 2–35 (AEEA…APTN), 37–69 (VLFS…KPYW), and 70–103 (PKGY…DPTN). One can recognise an STI1 1 domain in the interval 133-172 (GPEMWTKLTSDPSTRGFLQQPDFVNMMQEIQKNPSSLNLY). Phosphoserine is present on S167. Residues 189–248 (KFRPPPPQGDEAEVPESDMGQSSSNEPEVEKKREPEPEPEPEVTEEKEKKERKEKAKKEK) are disordered. Positions 232-248 (TEEKEKKERKEKAKKEK) are enriched in basic and acidic residues. A Bipartite nuclear localization signal motif is present at residues 241 to 258 (KEKAKKEKELGNAAYKKK). TPR repeat units lie at residues 244–277 (AKKE…DDED), 279–311 (SYLT…GREL), 319–356 (ARAL…HRNP), 358–382 (TLKR…DPKL), 383–416 (GDEE…NPND), 418–450 (KAYS…DPTF), and 451–484 (SKGY…DPSN). Residues 521-560 (DPEIQNILTDPVMRQVLSDLQENPSAAQKHMQNPMVMNKI) enclose the STI1 2 domain.

Co-chaperone that forms a complex with HSP70 and HSP90 and preproteins (e.g. chloroplast preproteins). Phosphorylated. Post-translationally, acetylated.

It localises to the cytoplasm. It is found in the nucleus. Its function is as follows. Mediates the association of the molecular chaperones HSP70 and HSP90. Mediates nuclear encoded chloroplast preproteins binding to HSP90 prior to chloroplastic sorting. This chain is Hsp70-Hsp90 organizing protein 1 (HOP1), found in Arabidopsis thaliana (Mouse-ear cress).